We begin with the raw amino-acid sequence, 419 residues long: Adenylosuccinate synthetase (419 aa).

GTP-binding positions include 11–17 (GDEGKGK) and 39–41 (GHS). Catalysis depends on D12, which acts as the Proton acceptor. 2 residues coordinate Mg(2+): D12 and G39. Residues 12–15 (DEGK), 37–40 (NAGH), T129, R143, N221, T236, and R296 contribute to the IMP site. H40 serves as the catalytic Proton donor. A substrate-binding site is contributed by 292-298 (VSTGRKR). GTP is bound by residues R298, 324 to 326 (KLD), and 408 to 410 (GTG).

Belongs to the adenylosuccinate synthetase family. In terms of assembly, homodimer. Requires Mg(2+) as cofactor.

The protein localises to the cytoplasm. It catalyses the reaction IMP + L-aspartate + GTP = N(6)-(1,2-dicarboxyethyl)-AMP + GDP + phosphate + 2 H(+). The protein operates within purine metabolism; AMP biosynthesis via de novo pathway; AMP from IMP: step 1/2. In terms of biological role, plays an important role in the de novo pathway and in the salvage pathway of purine nucleotide biosynthesis. Catalyzes the first committed step in the biosynthesis of AMP from IMP. This is Adenylosuccinate synthetase from Chaetomium globosum (strain ATCC 6205 / CBS 148.51 / DSM 1962 / NBRC 6347 / NRRL 1970) (Soil fungus).